The following is a 280-amino-acid chain: Transcription factor MYB60 (280 aa).

HTH myb-type domains follow at residues K9 to I65 and K66 to L116. DNA-binding regions (H-T-H motif) lie at residues W37–L61 and W89–L112. Residues C49 and C53 each carry the S-nitrosocysteine modification. The span at K118–S127 shows a compositional bias: basic and acidic residues. 2 disordered regions span residues K118–S149 and E204–P247. Residues E128–S149 are compositionally biased toward polar residues.

As to expression, specifically expressed in guard cells. Present in seedlings, leaves, stems and flowers.

Its subcellular location is the nucleus. Functionally, transcription factor involved in the regulation of gene (e.g. drought-regulated and flavonoid biosynthetic genes) expression and stomatal movements leading to negative regulation of responses to drought and responses to other physiological stimuli (e.g. light). Promotes guard cell deflation in response to water deficit. Triggers root growth upon osmotic stress (e.g. mannitol containing medium). The polypeptide is Transcription factor MYB60 (Arabidopsis thaliana (Mouse-ear cress)).